The primary structure comprises 404 residues: Acetate kinase (404 aa).

N7 contributes to the Mg(2+) binding site. K14 contributes to the ATP binding site. Substrate is bound at residue R95. D152 functions as the Proton donor/acceptor in the catalytic mechanism. Residues 212-216, 286-288, and 334-338 contribute to the ATP site; these read HLGNG, DMR, and GIGEN. Residue E388 coordinates Mg(2+).

This sequence belongs to the acetokinase family. Homodimer. Mg(2+) serves as cofactor. The cofactor is Mn(2+).

It localises to the cytoplasm. The enzyme catalyses acetate + ATP = acetyl phosphate + ADP. Its pathway is metabolic intermediate biosynthesis; acetyl-CoA biosynthesis; acetyl-CoA from acetate: step 1/2. Catalyzes the formation of acetyl phosphate from acetate and ATP. Can also catalyze the reverse reaction. This Lawsonia intracellularis (strain PHE/MN1-00) protein is Acetate kinase.